Here is a 526-residue protein sequence, read N- to C-terminus: Bifunctional purine biosynthesis protein PurH (526 aa).

Residues 1–147 (MSSIKRALIS…KNWKHVAIVT (147 aa)) form the MGS-like domain.

The protein belongs to the PurH family.

It carries out the reaction (6R)-10-formyltetrahydrofolate + 5-amino-1-(5-phospho-beta-D-ribosyl)imidazole-4-carboxamide = 5-formamido-1-(5-phospho-D-ribosyl)imidazole-4-carboxamide + (6S)-5,6,7,8-tetrahydrofolate. The enzyme catalyses IMP + H2O = 5-formamido-1-(5-phospho-D-ribosyl)imidazole-4-carboxamide. It functions in the pathway purine metabolism; IMP biosynthesis via de novo pathway; 5-formamido-1-(5-phospho-D-ribosyl)imidazole-4-carboxamide from 5-amino-1-(5-phospho-D-ribosyl)imidazole-4-carboxamide (10-formyl THF route): step 1/1. The protein operates within purine metabolism; IMP biosynthesis via de novo pathway; IMP from 5-formamido-1-(5-phospho-D-ribosyl)imidazole-4-carboxamide: step 1/1. This Neisseria meningitidis serogroup B (strain ATCC BAA-335 / MC58) protein is Bifunctional purine biosynthesis protein PurH.